An 885-amino-acid polypeptide reads, in one-letter code: DNA mismatch repair protein MutS (885 aa).

626–633 (GPNMGGKS) contributes to the ATP binding site.

Belongs to the DNA mismatch repair MutS family.

Its function is as follows. This protein is involved in the repair of mismatches in DNA. It is possible that it carries out the mismatch recognition step. This protein has a weak ATPase activity. In Burkholderia lata (strain ATCC 17760 / DSM 23089 / LMG 22485 / NCIMB 9086 / R18194 / 383), this protein is DNA mismatch repair protein MutS.